Consider the following 191-residue polypeptide: Cytochrome c oxidase subunit 6b-1 (191 aa).

Over residues 1-14 (MADAVNAQTPSLSE) the composition is skewed to polar residues. A disordered region spans residues 1–126 (MADAVNAQTP…IKLETAPADF (126 aa)). Position 2 is an N-acetylalanine (Ala-2). Basic and acidic residues-rich tracts occupy residues 16-37 (YHLE…KEVA) and 45-56 (EEVKTEQAKEES). Over residues 72-98 (APESTEVASEAPAAAEDNAEETPAAAE) the composition is skewed to low complexity. Residues 99-114 (ENNDENASEEVAEETP) are compositionally biased toward acidic residues. One can recognise a CHCH domain in the interval 134–177 (TRHCFTRYVEYHRCVAAKGDDAPECDKFAKFYRSLCPSEWVDRW). The short motif at 137–147 (CFTRYVEYHRC) is the Cx9C motif element. 2 disulfide bridges follow: Cys-137/Cys-169 and Cys-147/Cys-158. The short motif at 158–169 (CDKFAKFYRSLC) is the Cx10C motif element.

It belongs to the cytochrome c oxidase subunit 6B (TC 3.D.4.8) family. Expressed in the whole plant.

The protein resides in the mitochondrion. This protein is one of the nuclear-coded polypeptide chains of cytochrome c oxidase, the terminal oxidase in mitochondrial electron transport. This protein may be one of the heme-binding subunits of the oxidase. This is Cytochrome c oxidase subunit 6b-1 (COX6B-1) from Arabidopsis thaliana (Mouse-ear cress).